The primary structure comprises 156 residues: Lipoprotein signal peptidase (156 aa).

The helical transmembrane segment at 62 to 82 threads the bilayer; that stretch reads GNTVFMVLSAVIIAILSYTKI. Active-site residues include D115 and D133. Residues 126–146 traverse the membrane as a helical segment; that stretch reads WPAFNLADLTITCGVIVFLAM.

Belongs to the peptidase A8 family.

It is found in the cell inner membrane. The catalysed reaction is Release of signal peptides from bacterial membrane prolipoproteins. Hydrolyzes -Xaa-Yaa-Zaa-|-(S,diacylglyceryl)Cys-, in which Xaa is hydrophobic (preferably Leu), and Yaa (Ala or Ser) and Zaa (Gly or Ala) have small, neutral side chains.. It participates in protein modification; lipoprotein biosynthesis (signal peptide cleavage). In terms of biological role, this protein specifically catalyzes the removal of signal peptides from prolipoproteins. This chain is Lipoprotein signal peptidase, found in Anaplasma phagocytophilum (strain HZ).